A 443-amino-acid chain; its full sequence is Probable cytosolic iron-sulfur protein assembly protein 1 (443 aa).

Disordered stretches follow at residues 1–27 and 95–124; these read MSDP…WQTA and REEQ…DDDE. Residues 8-21 show a composition bias toward low complexity; the sequence is TLSPLATLTPPSSS. 2 WD repeats span residues 14–57 and 61–103; these read TLTP…LLHS and GHKR…GNED. Over residues 113-124 the composition is skewed to acidic residues; sequence AEDEDGRDDDDE. WD repeat units follow at residues 135–174, 180–219, 221–248, 255–294, 323–362, and 391–440; these read GHES…NFET, EHDG…WVQV, CIAG…KDFR, SEEQ…RAEN, VHER…QTPN, and AHSV…DPPQ.

Belongs to the WD repeat CIA1 family.

Its function is as follows. Essential component of the cytosolic iron-sulfur (Fe/S) protein assembly machinery. Required for the maturation of extramitochondrial Fe/S proteins. The polypeptide is Probable cytosolic iron-sulfur protein assembly protein 1 (Phaeosphaeria nodorum (strain SN15 / ATCC MYA-4574 / FGSC 10173) (Glume blotch fungus)).